A 97-amino-acid chain; its full sequence is Co-chaperonin GroES (97 aa).

The protein belongs to the GroES chaperonin family. As to quaternary structure, heptamer of 7 subunits arranged in a ring. Interacts with the chaperonin GroEL.

The protein resides in the cytoplasm. Together with the chaperonin GroEL, plays an essential role in assisting protein folding. The GroEL-GroES system forms a nano-cage that allows encapsulation of the non-native substrate proteins and provides a physical environment optimized to promote and accelerate protein folding. GroES binds to the apical surface of the GroEL ring, thereby capping the opening of the GroEL channel. The sequence is that of Co-chaperonin GroES from Pectobacterium atrosepticum (strain SCRI 1043 / ATCC BAA-672) (Erwinia carotovora subsp. atroseptica).